The primary structure comprises 221 residues: Glutathione S-transferase U25 (221 aa).

Alanine 2 bears the N-acetylalanine mark. Residues 3–82 (DEVILLDFWP…YIDEVWPSKT (80 aa)) enclose the GST N-terminal domain. Glutathione-binding positions include 13–14 (SM), 39–40 (NK), 53–54 (KI), and 66–67 (ES). One can recognise a GST C-terminal domain in the interval 88–208 (DPYQRAQAKF…LPDSEKIIKF (121 aa)). Phosphothreonine is present on threonine 149.

It belongs to the GST superfamily. Tau family.

Its subcellular location is the cytoplasm. The protein localises to the cytosol. The catalysed reaction is RX + glutathione = an S-substituted glutathione + a halide anion + H(+). In terms of biological role, may be involved in the conjugation of reduced glutathione to a wide number of exogenous and endogenous hydrophobic electrophiles and have a detoxification role against certain herbicides. The chain is Glutathione S-transferase U25 (GSTU25) from Arabidopsis thaliana (Mouse-ear cress).